Consider the following 156-residue polypeptide: Small ribosomal subunit protein uS7 (156 aa).

The protein belongs to the universal ribosomal protein uS7 family. As to quaternary structure, part of the 30S ribosomal subunit. Contacts proteins S9 and S11.

Its function is as follows. One of the primary rRNA binding proteins, it binds directly to 16S rRNA where it nucleates assembly of the head domain of the 30S subunit. Is located at the subunit interface close to the decoding center, probably blocks exit of the E-site tRNA. The protein is Small ribosomal subunit protein uS7 of Chlorobaculum parvum (strain DSM 263 / NCIMB 8327) (Chlorobium vibrioforme subsp. thiosulfatophilum).